The chain runs to 159 residues: NAD(P)H-quinone oxidoreductase subunit I, chloroplastic (159 aa).

2 4Fe-4S ferredoxin-type domains span residues 55–84 (GRIHFEFDKCIVCEVCVRVCPINLPVVDWN) and 95–124 (KNYSIDFGVCIFCGNCVEYCPTNCLSMTEE). [4Fe-4S] cluster contacts are provided by cysteine 64, cysteine 67, cysteine 70, cysteine 74, cysteine 104, cysteine 107, cysteine 110, and cysteine 114.

Belongs to the complex I 23 kDa subunit family. In terms of assembly, NDH is composed of at least 16 different subunits, 5 of which are encoded in the nucleus. The cofactor is [4Fe-4S] cluster.

The protein localises to the plastid. It localises to the chloroplast thylakoid membrane. The catalysed reaction is a plastoquinone + NADH + (n+1) H(+)(in) = a plastoquinol + NAD(+) + n H(+)(out). It carries out the reaction a plastoquinone + NADPH + (n+1) H(+)(in) = a plastoquinol + NADP(+) + n H(+)(out). Its function is as follows. NDH shuttles electrons from NAD(P)H:plastoquinone, via FMN and iron-sulfur (Fe-S) centers, to quinones in the photosynthetic chain and possibly in a chloroplast respiratory chain. The immediate electron acceptor for the enzyme in this species is believed to be plastoquinone. Couples the redox reaction to proton translocation, and thus conserves the redox energy in a proton gradient. The chain is NAD(P)H-quinone oxidoreductase subunit I, chloroplastic from Chara vulgaris (Common stonewort).